Consider the following 718-residue polypeptide: Putative aminodeoxychorismate synthase (718 aa).

A Glutamine amidotransferase type-1 domain is found at Gln-9–Gln-203. Cys-88 serves as the catalytic Nucleophile. Catalysis depends on residues His-177 and Glu-179. Residues Phe-266–Lys-718 are PABB component.

The protein in the C-terminal section; belongs to the anthranilate synthase component I family.

It is found in the cytoplasm. It localises to the nucleus. It carries out the reaction chorismate + L-glutamine = 4-amino-4-deoxychorismate + L-glutamate. It participates in cofactor biosynthesis; tetrahydrofolate biosynthesis; 4-aminobenzoate from chorismate: step 1/2. Its function is as follows. Catalyzes the biosynthesis of 4-amino-4-deoxychorismate (ADC) from chorismate and glutamine. Required for the synthesis of 4-aminobenzoate (PABA), an important component in tetrahydrofolate biosynthesis. The protein is Putative aminodeoxychorismate synthase of Schizosaccharomyces pombe (strain 972 / ATCC 24843) (Fission yeast).